Reading from the N-terminus, the 154-residue chain is Interleukin-2 (154 aa).

The signal sequence occupies residues 1–20 (MYRMQLLSCIALSLALITNS). The O-linked (GalNAc...) threonine glycan is linked to T23. The cysteines at positions 78 and 126 are disulfide-linked.

It belongs to the IL-2 family.

It is found in the secreted. In terms of biological role, cytokine produced by activated CD4-positive helper T-cells and to a lesser extend activated CD8-positive T-cells and natural killer (NK) cells that plays pivotal roles in the immune response and tolerance. Binds to a receptor complex composed of either the high-affinity trimeric IL-2R (IL2RA/CD25, IL2RB/CD122 and IL2RG/CD132) or the low-affinity dimeric IL-2R (IL2RB and IL2RG). Interaction with the receptor leads to oligomerization and conformation changes in the IL-2R subunits resulting in downstream signaling starting with phosphorylation of JAK1 and JAK3. In turn, JAK1 and JAK3 phosphorylate the receptor to form a docking site leading to the phosphorylation of several substrates including STAT5. This process leads to activation of several pathways including STAT, phosphoinositide-3-kinase/PI3K and mitogen-activated protein kinase/MAPK pathways. Functions as a T-cell growth factor and can increase NK-cell cytolytic activity as well. Promotes strong proliferation of activated B-cells and subsequently immunoglobulin production. Plays a pivotal role in regulating the adaptive immune system by controlling the survival and proliferation of regulatory T-cells, which are required for the maintenance of immune tolerance. Moreover, participates in the differentiation and homeostasis of effector T-cell subsets, including Th1, Th2, Th17 as well as memory CD8-positive T-cells. The polypeptide is Interleukin-2 (IL2) (Papio hamadryas (Hamadryas baboon)).